A 353-amino-acid chain; its full sequence is Photosystem II protein D1 (353 aa).

N-acetylthreonine is present on T2. A Phosphothreonine modification is found at T2. The next 3 membrane-spanning stretches (helical) occupy residues Y29–S46, H118–L133, and W142–A156. Residue H118 participates in chlorophyll a binding. Y126 is a pheophytin a binding site. [CaMn4O5] cluster is bound by residues D170 and E189. A helical transmembrane segment spans residues F197 to L218. H198 contacts chlorophyll a. A quinone contacts are provided by residues H215 and S264–F265. H215 serves as a coordination point for Fe cation. Fe cation is bound at residue H272. The helical transmembrane segment at F274 to L288 threads the bilayer. 4 residues coordinate [CaMn4O5] cluster: H332, E333, D342, and A344. Residues A345–G353 constitute a propeptide that is removed on maturation.

Belongs to the reaction center PufL/M/PsbA/D family. As to quaternary structure, PSII is composed of 1 copy each of membrane proteins PsbA, PsbB, PsbC, PsbD, PsbE, PsbF, PsbH, PsbI, PsbJ, PsbK, PsbL, PsbM, PsbT, PsbX, PsbY, PsbZ, Psb30/Ycf12, at least 3 peripheral proteins of the oxygen-evolving complex and a large number of cofactors. It forms dimeric complexes. The D1/D2 heterodimer binds P680, chlorophylls that are the primary electron donor of PSII, and subsequent electron acceptors. It shares a non-heme iron and each subunit binds pheophytin, quinone, additional chlorophylls, carotenoids and lipids. D1 provides most of the ligands for the Mn4-Ca-O5 cluster of the oxygen-evolving complex (OEC). There is also a Cl(-1) ion associated with D1 and D2, which is required for oxygen evolution. The PSII complex binds additional chlorophylls, carotenoids and specific lipids. serves as cofactor. Post-translationally, tyr-161 forms a radical intermediate that is referred to as redox-active TyrZ, YZ or Y-Z. C-terminally processed by CTPA; processing is essential to allow assembly of the oxygen-evolving complex and thus photosynthetic growth.

It localises to the plastid. The protein localises to the chloroplast thylakoid membrane. The enzyme catalyses 2 a plastoquinone + 4 hnu + 2 H2O = 2 a plastoquinol + O2. Functionally, photosystem II (PSII) is a light-driven water:plastoquinone oxidoreductase that uses light energy to abstract electrons from H(2)O, generating O(2) and a proton gradient subsequently used for ATP formation. It consists of a core antenna complex that captures photons, and an electron transfer chain that converts photonic excitation into a charge separation. The D1/D2 (PsbA/PsbD) reaction center heterodimer binds P680, the primary electron donor of PSII as well as several subsequent electron acceptors. In Coffea arabica (Arabian coffee), this protein is Photosystem II protein D1.